The sequence spans 227 residues: Cytochrome c oxidase subunit 2 (227 aa).

Over 1–14 (MAYPFQLGLQDATS) the chain is Mitochondrial intermembrane. The helical transmembrane segment at 15–45 (PIMEELLHFHDHTLMIVFLISSLVLYIISLM) threads the bilayer. Residues 46-59 (LTTKLTHTSTMDAQ) are Mitochondrial matrix-facing. A helical transmembrane segment spans residues 60-87 (EVETVWTILPAIILILIALPSLRILYMM). Topologically, residues 88–227 (DEINNPSLTV…YFETWSAVMV (140 aa)) are mitochondrial intermembrane. Cu cation-binding residues include His-161, Cys-196, Glu-198, Cys-200, His-204, and Met-207. Glu-198 serves as a coordination point for Mg(2+). A Phosphotyrosine modification is found at Tyr-218.

The protein belongs to the cytochrome c oxidase subunit 2 family. Component of the cytochrome c oxidase (complex IV, CIV), a multisubunit enzyme composed of 14 subunits. The complex is composed of a catalytic core of 3 subunits MT-CO1, MT-CO2 and MT-CO3, encoded in the mitochondrial DNA, and 11 supernumerary subunits COX4I, COX5A, COX5B, COX6A, COX6B, COX6C, COX7A, COX7B, COX7C, COX8 and NDUFA4, which are encoded in the nuclear genome. The complex exists as a monomer or a dimer and forms supercomplexes (SCs) in the inner mitochondrial membrane with NADH-ubiquinone oxidoreductase (complex I, CI) and ubiquinol-cytochrome c oxidoreductase (cytochrome b-c1 complex, complex III, CIII), resulting in different assemblies (supercomplex SCI(1)III(2)IV(1) and megacomplex MCI(2)III(2)IV(2)). Found in a complex with TMEM177, COA6, COX18, COX20, SCO1 and SCO2. Interacts with TMEM177 in a COX20-dependent manner. Interacts with COX20. Interacts with COX16. It depends on Cu cation as a cofactor.

The protein localises to the mitochondrion inner membrane. The enzyme catalyses 4 Fe(II)-[cytochrome c] + O2 + 8 H(+)(in) = 4 Fe(III)-[cytochrome c] + 2 H2O + 4 H(+)(out). Component of the cytochrome c oxidase, the last enzyme in the mitochondrial electron transport chain which drives oxidative phosphorylation. The respiratory chain contains 3 multisubunit complexes succinate dehydrogenase (complex II, CII), ubiquinol-cytochrome c oxidoreductase (cytochrome b-c1 complex, complex III, CIII) and cytochrome c oxidase (complex IV, CIV), that cooperate to transfer electrons derived from NADH and succinate to molecular oxygen, creating an electrochemical gradient over the inner membrane that drives transmembrane transport and the ATP synthase. Cytochrome c oxidase is the component of the respiratory chain that catalyzes the reduction of oxygen to water. Electrons originating from reduced cytochrome c in the intermembrane space (IMS) are transferred via the dinuclear copper A center (CU(A)) of subunit 2 and heme A of subunit 1 to the active site in subunit 1, a binuclear center (BNC) formed by heme A3 and copper B (CU(B)). The BNC reduces molecular oxygen to 2 water molecules using 4 electrons from cytochrome c in the IMS and 4 protons from the mitochondrial matrix. In Lycalopex culpaeus (Culpeo fox), this protein is Cytochrome c oxidase subunit 2 (MT-CO2).